Here is a 166-residue protein sequence, read N- to C-terminus: Urease accessory protein UreE (166 aa).

A disordered region spans residues 132 to 156 (FQPEHGAYGGGHHHSRHGDEDFNYP).

The protein belongs to the UreE family.

Its subcellular location is the cytoplasm. Its function is as follows. Involved in urease metallocenter assembly. Binds nickel. Probably functions as a nickel donor during metallocenter assembly. This Pseudomonas fluorescens (strain ATCC BAA-477 / NRRL B-23932 / Pf-5) protein is Urease accessory protein UreE.